The sequence spans 300 residues: Protein YIF1B (300 aa).

A disordered region spans residues 1 to 46 (MNQESSFRAPPKRRVRGPNPNISTPHQLFDDTSGGPVPHGGEYPNH). The Cytoplasmic segment spans residues 1–142 (MNQESSFRAP…APRFDINAPD (142 aa)). Residues 143 to 163 (LYIPVMAFITYILVAGLALGT) form a helical membrane-spanning segment. The Extracellular portion of the chain corresponds to 164–178 (QSRFSPEILGMQASS). A helical transmembrane segment spans residues 179 to 199 (ALAWLIVEVLAILLSLYLVTV). At 200–205 (NTDLTT) the chain is on the cytoplasmic side. Residues 206 to 226 (VDLVAFSGYKYVGMISGVISG) form a helical membrane-spanning segment. Residue Leu-227 is a topological domain, extracellular. Residues 228–248 (LFGKTGYYVVLSWCGISVVFF) traverse the membrane as a helical segment. The Cytoplasmic portion of the chain corresponds to 249–278 (MIRTLRLKILSEAAAEGVLVRGARNQLRMY). A helical transmembrane segment spans residues 279–299 (LTMAIAAVQPIFMYWLTYHLV). Position 300 (Arg-300) is a topological domain, extracellular.

The protein belongs to the YIF1 family.

It localises to the endoplasmic reticulum membrane. It is found in the golgi apparatus membrane. Its subcellular location is the endoplasmic reticulum-Golgi intermediate compartment membrane. Functions in endoplasmic reticulum to Golgi vesicle-mediated transport and regulates the proper organization of the endoplasmic reticulum and the Golgi. Plays a key role in targeting to neuronal dendrites receptors such as HTR1A. Plays also a role in primary cilium and sperm flagellum assembly probably through protein transport to these compartments. The chain is Protein YIF1B (yif1b) from Xenopus tropicalis (Western clawed frog).